The primary structure comprises 173 residues: Dirigent protein 8 (173 aa).

An N-terminal signal peptide occupies residues 1–22 (MTNLILIFAAQILLFYAVASVG). Asparagine 69, asparagine 90, and asparagine 125 each carry an N-linked (GlcNAc...) asparagine glycan.

This sequence belongs to the plant dirigent protein family. As to quaternary structure, homodimer.

The protein resides in the secreted. Its subcellular location is the extracellular space. The protein localises to the apoplast. In terms of biological role, dirigent proteins impart stereoselectivity on the phenoxy radical-coupling reaction, yielding optically active lignans from two molecules of coniferyl alcohol in the biosynthesis of lignans, flavonolignans, and alkaloids and thus plays a central role in plant secondary metabolism. This chain is Dirigent protein 8 (DIR8), found in Arabidopsis thaliana (Mouse-ear cress).